The sequence spans 222 residues: UPF0502 protein XAC4278 (222 aa).

This sequence belongs to the UPF0502 family.

This Xanthomonas axonopodis pv. citri (strain 306) protein is UPF0502 protein XAC4278.